The following is a 401-amino-acid chain: O-antigen ligase (401 aa).

At 1 to 20 the chain is on the cytoplasmic side; it reads MFAATRLSRLRHDTSRILSH. A helical membrane pass occupies residues 21 to 37; that stretch reads WILPLGWLALLTGMFWV. The Periplasmic portion of the chain corresponds to 38-42; the sequence is GDRSD. The helical transmembrane segment at 43–61 threads the bilayer; that stretch reads YHRLFYILLAAPTLLYVIL. At 62-72 the chain is on the cytoplasmic side; it reads QPRLLRPLTGS. Residues 73 to 92 form a helical membrane-spanning segment; sequence PLFIAFLAFSSYMMLSLSWS. Residues 93-103 are Periplasmic-facing; that stretch reads TPENSTGSLLK. The helical transmembrane segment at 104–122 threads the bilayer; sequence RPLYIALLFFCAAILALEA. The Cytoplasmic portion of the chain corresponds to 123-129; it reads PLRLKTA. A helical membrane pass occupies residues 130–150; it reads TWLAALGAVISAAATLLRYYW. The Periplasmic segment spans residues 151-161; that stretch reads DANPLRLTGYG. The chain crosses the membrane as a helical span at residues 162–183; that stretch reads ALYNPLLSAHVYGAFTALWLAY. The Cytoplasmic segment spans residues 184-189; the sequence is WMQSRP. Residues 190–208 form a helical membrane-spanning segment; that stretch reads ILAPLPLISLALLGGLLIA. The Periplasmic portion of the chain corresponds to 209 to 212; the sequence is TGSR. Residues 213–229 traverse the membrane as a helical segment; it reads TPLVGLTAALMWLVLAG. Residues 230–234 lie on the Cytoplasmic side of the membrane; it reads DRKKA. A helical membrane pass occupies residues 235–252; the sequence is LIALALALAGALLGYILY. Over 253–306 the chain is Periplasmic; sequence PEVITQRGASFRPEIWADALRQISEHPWLGHGYDHPMRIVLSNGMLLADPHNIE. Positions 258 to 319 are WZY-C; that stretch reads QRGASFRPEI…LFAGGIIGLL (62 aa). Residues 307-331 traverse the membrane as a helical segment; that stretch reads LGVLFAGGIIGLLLWVAIYALAFGF. At 332-339 the chain is on the cytoplasmic side; sequence SWKNRKSP. The helical transmembrane segment at 340 to 357 threads the bilayer; the sequence is AVLLASTWLVFGLAAGLT. Topologically, residues 358–368 are periplasmic; sequence EGNAFLPRPKE. A helical membrane pass occupies residues 369–385; sequence HWFLIWIPMALLYALWI. Residues 386–401 are Cytoplasmic-facing; it reads QQRFAASRRGEDIAAP.

It belongs to the O-antigen ligase family. As to quaternary structure, homodimer.

The protein resides in the cell inner membrane. It carries out the reaction a lipid-linked O antigen + a lipid A-core oligosaccharide = a lipopolysaccharide + a polyisoprenyl diphosphate.. It functions in the pathway bacterial outer membrane biogenesis; lipopolysaccharide biosynthesis. Its activity is regulated as follows. Activity does not require ATP and magnesium ions. Its function is as follows. Transferase involved in the biosynthesis of the lipopolysaccharide (LPS). Catalyzes the transfer of a polymerized O-antigen molecule from its polyprenyl diphosphate membrane anchor to a terminal sugar of the lipid A-core oligosaccharide, finalizing the biosynthesis of the lipopolysaccharide. Required for the attachment of both A-band and B-band O-antigens, two forms of O-antigen produced by P.aeruginosa, onto the lipid A-core receptors. Important for cell wall integrity and motility of the bacteria. This chain is O-antigen ligase, found in Pseudomonas aeruginosa (strain ATCC 15692 / DSM 22644 / CIP 104116 / JCM 14847 / LMG 12228 / 1C / PRS 101 / PAO1).